A 235-amino-acid chain; its full sequence is Glucosamine-6-phosphate deaminase (235 aa).

The active-site Proton acceptor; for enolization step is the Asp-62. The active-site For ring-opening step is Asn-128. The active-site Proton acceptor; for ring-opening step is His-130. The For ring-opening step role is filled by Glu-135.

The protein belongs to the glucosamine/galactosamine-6-phosphate isomerase family. NagB subfamily.

The catalysed reaction is alpha-D-glucosamine 6-phosphate + H2O = beta-D-fructose 6-phosphate + NH4(+). It functions in the pathway amino-sugar metabolism; N-acetylneuraminate degradation; D-fructose 6-phosphate from N-acetylneuraminate: step 5/5. Functionally, catalyzes the reversible isomerization-deamination of glucosamine 6-phosphate (GlcN6P) to form fructose 6-phosphate (Fru6P) and ammonium ion. This Lactococcus lactis subsp. lactis (strain IL1403) (Streptococcus lactis) protein is Glucosamine-6-phosphate deaminase.